The primary structure comprises 206 residues: Tetrathionate response regulatory protein TtrR (206 aa).

The region spanning 3 to 117 (TIHLLDDDTA…PLQAALERAL (115 aa)) is the Response regulatory domain. The residue at position 52 (Asp-52) is a 4-aspartylphosphate. One can recognise an HTH luxR-type domain in the interval 134 to 194 (QQLTPKEREL…ELIRRFEKMA (61 aa)). Residues 153-172 (NREIAEAMNIAVRTVEVHRA) constitute a DNA-binding region (H-T-H motif).

In terms of processing, phosphorylated by TtrS.

It localises to the cytoplasm. In terms of biological role, member of the two-component regulatory system TtrR/TtrS, which is required for synthesis of tetrathionate reductase. Positively regulates transcription of the ttrBCA operon. During mice infection, the ability to use tetrathionate as an electron acceptor is a growth advantage for S.typhimurium over the competing microbiota in the lumen of the inflamed gut. This is Tetrathionate response regulatory protein TtrR (ttrR) from Salmonella typhimurium (strain LT2 / SGSC1412 / ATCC 700720).